We begin with the raw amino-acid sequence, 217 residues long: Methylthioribulose-1-phosphate dehydratase (217 aa).

Positions 106 and 108 each coordinate Zn(2+).

It belongs to the aldolase class II family. MtnB subfamily. Zn(2+) is required as a cofactor.

The catalysed reaction is 5-(methylsulfanyl)-D-ribulose 1-phosphate = 5-methylsulfanyl-2,3-dioxopentyl phosphate + H2O. It participates in amino-acid biosynthesis; L-methionine biosynthesis via salvage pathway; L-methionine from S-methyl-5-thio-alpha-D-ribose 1-phosphate: step 2/6. Catalyzes the dehydration of methylthioribulose-1-phosphate (MTRu-1-P) into 2,3-diketo-5-methylthiopentyl-1-phosphate (DK-MTP-1-P). In Xanthomonas campestris pv. campestris (strain 8004), this protein is Methylthioribulose-1-phosphate dehydratase.